We begin with the raw amino-acid sequence, 150 residues long: Arginine repressor (150 aa).

The protein belongs to the ArgR family.

It is found in the cytoplasm. It participates in amino-acid biosynthesis; L-arginine biosynthesis [regulation]. In terms of biological role, regulates arginine biosynthesis genes. This is Arginine repressor from Clostridium beijerinckii (strain ATCC 51743 / NCIMB 8052) (Clostridium acetobutylicum).